We begin with the raw amino-acid sequence, 817 residues long: Leucine--tRNA ligase (817 aa).

The 'HIGH' region motif lies at 51 to 61 (PYPSGDLHVGH). The 'KMSKS' region signature appears at 588-592 (RMSKS). Lysine 591 contacts ATP.

This sequence belongs to the class-I aminoacyl-tRNA synthetase family.

It is found in the cytoplasm. It catalyses the reaction tRNA(Leu) + L-leucine + ATP = L-leucyl-tRNA(Leu) + AMP + diphosphate. In Rubrobacter xylanophilus (strain DSM 9941 / JCM 11954 / NBRC 16129 / PRD-1), this protein is Leucine--tRNA ligase.